We begin with the raw amino-acid sequence, 102 residues long: Acid shock protein (102 aa).

The N-terminal stretch at 1–21 (MKKVLALVVAAAMGLSSAAFA) is a signal peptide. The segment covering 22-41 (AETATTPAPTATTTKAAPAK) has biased composition (low complexity). Residues 22–58 (AETATTPAPTATTTKAAPAKTTHHKKQHKAAPAQKAQ) constitute a propeptide that is removed on maturation. Residues 22-102 (AETATTPAPT…PAKPAAQPAA (81 aa)) form a disordered region. Residues 80–90 (AAKKHAGKHSH) show a composition bias toward basic residues. The span at 91 to 102 (QQPAKPAAQPAA) shows a compositional bias: low complexity.

This sequence belongs to the Asr family. Post-translationally, proteolytic processing gives rise to the active protein.

Its subcellular location is the periplasm. Functionally, required for growth and/or survival at acidic conditions. This is Acid shock protein from Escherichia coli (strain 55989 / EAEC).